A 318-amino-acid chain; its full sequence is Tyrosine--tRNA ligase (318 aa).

Y35 lines the L-tyrosine pocket. A 'HIGH' region motif is present at residues 40-48 (PSGKVHLGH). The L-tyrosine site is built by Y154, Q158, D161, and Q176. The 'KMSKS' region motif lies at 211–215 (KMSSS). S214 serves as a coordination point for ATP.

This sequence belongs to the class-I aminoacyl-tRNA synthetase family. TyrS type 3 subfamily. As to quaternary structure, homodimer.

It is found in the cytoplasm. It catalyses the reaction tRNA(Tyr) + L-tyrosine + ATP = L-tyrosyl-tRNA(Tyr) + AMP + diphosphate + H(+). In terms of biological role, catalyzes the attachment of tyrosine to tRNA(Tyr) in a two-step reaction: tyrosine is first activated by ATP to form Tyr-AMP and then transferred to the acceptor end of tRNA(Tyr). The protein is Tyrosine--tRNA ligase of Methanosphaera stadtmanae (strain ATCC 43021 / DSM 3091 / JCM 11832 / MCB-3).